A 250-amino-acid polypeptide reads, in one-letter code: Probable transcriptional regulatory protein SYNAS_07390 (250 aa).

It belongs to the TACO1 family.

The protein localises to the cytoplasm. The sequence is that of Probable transcriptional regulatory protein SYNAS_07390 from Syntrophus aciditrophicus (strain SB).